The following is a 146-amino-acid chain: Hemoglobin subunit beta (146 aa).

The region spanning 2-146 is the Globin domain; that stretch reads HWSAEEKQLI…VAHALARKYH (145 aa). 2 residues coordinate heme b: His63 and His92.

It belongs to the globin family. In terms of assembly, heterotetramer of two alpha chains and two beta chains. As to expression, red blood cells.

In terms of biological role, involved in oxygen transport from the lung to the various peripheral tissues. The protein is Hemoglobin subunit beta (HBB) of Eudyptes chrysocome (Western rockhopper penguin).